Reading from the N-terminus, the 80-residue chain is Polcalcin Cyn d 7 (80 aa).

2 consecutive EF-hand domains span residues 2–37 and 40–72; these read ADTGDMEHIFKRFDTNGDGKISLAELTDALRTLGST and DEVQRMMAEIDTDGDGFIDFDEFISFCNANPGL. Residues Asp15, Asn17, Asp19, Lys21, Glu26, Asp50, Asp52, Asp54, and Glu61 each contribute to the Ca(2+) site.

The protein is Polcalcin Cyn d 7 of Cynodon dactylon (Bermuda grass).